We begin with the raw amino-acid sequence, 221 residues long: 7-cyano-7-deazaguanine synthase (221 aa).

7 to 17 is an ATP binding site; sequence LSGGMDSTTLL. Residues cysteine 183, cysteine 191, cysteine 194, and cysteine 197 each coordinate Zn(2+).

The protein belongs to the QueC family. In terms of assembly, homodimer. It depends on Zn(2+) as a cofactor.

The catalysed reaction is 7-carboxy-7-deazaguanine + NH4(+) + ATP = 7-cyano-7-deazaguanine + ADP + phosphate + H2O + H(+). The protein operates within purine metabolism; 7-cyano-7-deazaguanine biosynthesis. Functionally, catalyzes the ATP-dependent conversion of 7-carboxy-7-deazaguanine (CDG) to 7-cyano-7-deazaguanine (preQ(0)). In Caldicellulosiruptor bescii (strain ATCC BAA-1888 / DSM 6725 / KCTC 15123 / Z-1320) (Anaerocellum thermophilum), this protein is 7-cyano-7-deazaguanine synthase.